The chain runs to 1313 residues: Angiotensin-converting enzyme (1313 aa).

A signal peptide spans 1–35; the sequence is MGAASGQRGRWPLSPPLLMLSLLLLLLLPPSPAPA. The Extracellular segment spans residues 36–1265; that stretch reads LDPGLQPGNF…LEPQQARVGQ (1230 aa). Asn44, Asn60, Asn80, Asn117, Asn152, and Asn166 each carry an N-linked (GlcNAc...) asparagine glycan. Peptidase M2 domains are found at residues 46-630 and 649-1228; these read SADE…LGWP and ETDE…LGWP. Cys163 and Cys171 are oxidised to a cystine. Chloride is bound at residue Tyr237. N-linked (GlcNAc...) asparagine glycosylation is present at Asn324. Cys365 and Cys383 are disulfide-bonded. His396 lines the Zn(2+) pocket. The active-site Proton acceptor 1 is the Glu397. Residues His400 and Glu424 each contribute to the Zn(2+) site. Asn515 carries N-linked (GlcNAc...) asparagine glycosylation. The Proton donor 1 role is filled by His526. Arg535 provides a ligand contact to chloride. A disulfide bond links Cys551 and Cys563. N-linked (GlcNAc...) asparagine glycosylation is found at Asn683, Asn701, Asn720, and Asn766. Cys763 and Cys769 are joined by a disulfide. Residues Arg797 and Tyr835 each contribute to the chloride site. An N-linked (GlcNAc...) asparagine glycan is attached at Asn948. Cysteines 963 and 981 form a disulfide. Position 994 (His994) interacts with Zn(2+). Glu995 serves as the catalytic Proton acceptor 2. The Zn(2+) site is built by His998 and Glu1022. Chloride-binding residues include Trp1096 and Arg1100. The active-site Proton donor 2 is the His1124. Arg1133 serves as a coordination point for chloride. Cys1149 and Cys1161 are oxidised to a cystine. N-linked (GlcNAc...) asparagine glycosylation occurs at Asn1197. Positions 1221 to 1262 are juxtamembrane stalk; the sequence is HGETLGWPEYTWTPNTARAEGSLPESSRVNFLGMYLEPQQAR. The chain crosses the membrane as a helical span at residues 1266 to 1282; sequence WVLLFLGVALLVATVGL. The Cytoplasmic portion of the chain corresponds to 1283 to 1313; the sequence is AHRLYNIHNHHSLRRPHRGPQFGSEVELRHS. At Ser1306 the chain carries Phosphoserine.

This sequence belongs to the peptidase M2 family. In terms of assembly, monomer and homodimer; homodimerizes following binding to an inhibitor. Interacts with calmodulin (CALM1, CALM2 or CALM3); interaction takes place in the cytoplasmic region and regulates phosphorylation and proteolytic cleavage. Requires Zn(2+) as cofactor. Chloride is required as a cofactor. In terms of processing, produced following proteolytic cleavage by secretase enzymes that cleave the transmembrane form in the juxtamembrane stalk region upstream of the transmembrane region. Cleavage can take place at different sites of the juxtamembrane stalk region. Phosphorylated by CK2 on Ser-1306; which allows membrane retention. Phosphorylated on tyrosine residues on its extracellular part, promoting cleavage by secretase enzymes and formation of the soluble form (Angiotensin-converting enzyme, soluble form). In terms of tissue distribution, expressed in brain, kidney, lung, skeletal muscle and heart. Testis-specific isoform is expressed in spermatocytes, adult testis.

It localises to the cell membrane. The protein localises to the cytoplasm. It is found in the secreted. The catalysed reaction is Release of a C-terminal dipeptide, oligopeptide-|-Xaa-Yaa, when Xaa is not Pro, and Yaa is neither Asp nor Glu. Thus, conversion of angiotensin I to angiotensin II, with increase in vasoconstrictor activity, but no action on angiotensin II.. The enzyme catalyses angiotensin I + H2O = L-histidyl-L-leucine + angiotensin II. It carries out the reaction bradykinin + H2O = L-Phe-L-Arg + bradykinin(1-7). It catalyses the reaction substance P + H2O = substance P(1-9) + L-Leu-L-Met-NH2. The catalysed reaction is substance P + H2O = substance P(1-8) + Gly-L-Leu-L-Met-NH2. The enzyme catalyses substance P + H2O = L-Phe-L-Phe-Gly-L-Leu-L-Met-NH2 + substance P(1-6). It carries out the reaction neurotensin + H2O = neurotensin(1-11) + L-isoleucyl-L-leucine. It catalyses the reaction goralatide + H2O = N-acetyl-L-seryl-L-aspartate + L-lysyl-L-proline. The catalysed reaction is Met-enkephalin + H2O = L-phenylalanyl-L-methionine + L-tyrosylglycylglycine. The enzyme catalyses Leu-enkephalin + H2O = L-tyrosylglycylglycine + L-phenylalanyl-L-leucine. It carries out the reaction Met-enkephalin-Arg-Phe + H2O = L-arginyl-L-phenylalanine + Met-enkephalin. With respect to regulation, the dipeptidyl carboxypeptidase activity is strongly activated by chloride. The dipeptidyl carboxypeptidase activity is specifically inhibited by lisinopril, captopril and enalaprilat. Its activity is regulated as follows. Strongly inhibited by lisinopril and captopril. Its function is as follows. Dipeptidyl carboxypeptidase that removes dipeptides from the C-terminus of a variety of circulating hormones, such as angiotensin I, bradykinin or enkephalins, thereby playing a key role in the regulation of blood pressure, electrolyte homeostasis or synaptic plasticity. Composed of two similar catalytic domains, each possessing a functional active site, with different selectivity for substrates. Plays a major role in the angiotensin-renin system that regulates blood pressure and sodium retention by the kidney by converting angiotensin I to angiotensin II, resulting in an increase of the vasoconstrictor activity of angiotensin. Also able to inactivate bradykinin, a potent vasodilator, and therefore enhance the blood pressure response. Acts as a regulator of synaptic transmission by mediating cleavage of neuropeptide hormones, such as substance P, neurotensin or enkephalins. Catalyzes degradation of different enkephalin neuropeptides (Met-enkephalin, Leu-enkephalin, Met-enkephalin-Arg-Phe and possibly Met-enkephalin-Arg-Gly-Leu). Acts as a regulator of synaptic plasticity in the nucleus accumbens of the brain by mediating cleavage of Met-enkephalin-Arg-Phe, a strong ligand of Mu-type opioid receptor OPRM1, into Met-enkephalin. Met-enkephalin-Arg-Phe cleavage by ACE decreases activation of OPRM1, leading to long-term synaptic potentiation of glutamate release. Also acts as a regulator of hematopoietic stem cell differentiation by mediating degradation of hemoregulatory peptide N-acetyl-SDKP (AcSDKP). Acts as a regulator of cannabinoid signaling pathway by mediating degradation of hemopressin, an antagonist peptide of the cannabinoid receptor CNR1. Involved in amyloid-beta metabolism by catalyzing degradation of Amyloid-beta protein 40 and Amyloid-beta protein 42 peptides, thereby preventing plaque formation. Catalyzes cleavage of cholecystokinin (maturation of Cholecystokinin-8 and Cholecystokinin-5) and Gonadoliberin-1 (both maturation and degradation) hormones. Degradation of hemoregulatory peptide N-acetyl-SDKP (AcSDKP) and amyloid-beta proteins is mediated by the N-terminal catalytic domain, while angiotensin I and cholecystokinin cleavage is mediated by the C-terminal catalytic region. Functionally, soluble form that is released in blood plasma and other body fluids following proteolytic cleavage in the juxtamembrane stalk region. Isoform produced by alternative promoter usage that is specifically expressed in spermatocytes and adult testis, and which is required for male fertility. In contrast to somatic isoforms, only contains one catalytic domain. Acts as a dipeptidyl carboxypeptidase that removes dipeptides from the C-terminus of substrates. The identity of substrates that are needed for male fertility is unknown. May also have a glycosidase activity which releases GPI-anchored proteins from the membrane by cleaving the mannose linkage in the GPI moiety. The GPIase activity was reported to be essential for the egg-binding ability of the sperm. This activity is however unclear and has been challenged by other groups, suggesting that it may be indirect. This chain is Angiotensin-converting enzyme, found in Rattus norvegicus (Rat).